We begin with the raw amino-acid sequence, 588 residues long: MEVKANQAKETKKGVLKRIAGPVVTAVNLDAHMYDVVRVGNEALMGEVIKIQGDNVIIQVYEDTTGIKPGEPVSNTGLSLAVELGPGLLTSIYDGIQRPLEVLVNKMGNFIERGVSAPGLSHEKKWTFKPVVKAGDKVEPGAILGEVQETNIVHKVMLPPNVKAGVVKTIKAGDFTVDEIIVILEDGREYPMIQRWPVRVPRPVKEKKNPTIPLLTGQRILDGLFPIAKGGTAAIPGPFGSGKTVTQQQLAKWSDAKIVVYIGCGERGNEMTEVLTEFPHLEDPTSGKPLMERTVLIANTSNMPVAAREASVYTGITIAEYFRDMGYDVSLMADSTSRWAEAMREISSRLEEMPGEEGYPAYLAARLSEFYERAGLVETLNHQSGSVSVIGAVSPPGGDFSEPVTQNTLRIVKVFWALDAKLSQRRHFPAINWLNSYSLYLDALHDWYDKNVSPDWNKLRSWAMGVLQKEAELQEIVQLVGSDALPETEQITIEVARMIREIFLQQNAYDAVDTFCDMQKQYDMMKAIRLYSDLANTAQAAGVSPAQITTIKAKNELPQIKFVKDYKQPLAKIEKDMDAEFNALRSAA.

Residue 237 to 244 participates in ATP binding; it reads GPFGSGKT.

Belongs to the ATPase alpha/beta chains family. As to quaternary structure, has multiple subunits with at least A(3), B(3), C, D, E, F, H, I and proteolipid K(x).

Its subcellular location is the cell membrane. The enzyme catalyses ATP + H2O + 4 H(+)(in) = ADP + phosphate + 5 H(+)(out). In terms of biological role, component of the A-type ATP synthase that produces ATP from ADP in the presence of a proton gradient across the membrane. The A chain is the catalytic subunit. This chain is A-type ATP synthase subunit A, found in Methanoregula boonei (strain DSM 21154 / JCM 14090 / 6A8).